Here is a 343-residue protein sequence, read N- to C-terminus: Aspartate carbamoyltransferase catalytic subunit (343 aa).

2 residues coordinate carbamoyl phosphate: arginine 91 and threonine 92. Lysine 119 contributes to the L-aspartate binding site. Residues arginine 141, histidine 171, and glutamine 174 each coordinate carbamoyl phosphate. Residues arginine 204 and arginine 259 each coordinate L-aspartate. Carbamoyl phosphate-binding residues include glycine 300 and proline 301.

Belongs to the aspartate/ornithine carbamoyltransferase superfamily. ATCase family. In terms of assembly, heterododecamer (2C3:3R2) of six catalytic PyrB chains organized as two trimers (C3), and six regulatory PyrI chains organized as three dimers (R2).

It carries out the reaction carbamoyl phosphate + L-aspartate = N-carbamoyl-L-aspartate + phosphate + H(+). It functions in the pathway pyrimidine metabolism; UMP biosynthesis via de novo pathway; (S)-dihydroorotate from bicarbonate: step 2/3. Functionally, catalyzes the condensation of carbamoyl phosphate and aspartate to form carbamoyl aspartate and inorganic phosphate, the committed step in the de novo pyrimidine nucleotide biosynthesis pathway. This is Aspartate carbamoyltransferase catalytic subunit from Burkholderia thailandensis (strain ATCC 700388 / DSM 13276 / CCUG 48851 / CIP 106301 / E264).